The chain runs to 632 residues: Arginyl-tRNA--protein transferase 1 (632 aa).

Positions 1-18 (MSLKNDASSSHDGGSNRE) are enriched in polar residues. 4 disordered regions span residues 1 to 27 (MSLK…HGRR), 113 to 144 (KLDV…AKSE), 284 to 312 (NGNI…HQAR), and 517 to 580 (PAAS…NDIN). Positions 113–122 (KLDVQPREQR) are enriched in basic and acidic residues. Over residues 285–296 (GNISRGANSLDG) the composition is skewed to polar residues. The segment covering 298 to 310 (ETLHAKKDSENHQ) has biased composition (basic and acidic residues). Acidic residues predominate over residues 538–563 (SDEDEDEDEDDDDDDDDDEEMYETES). Residues 564-578 (EDSHIESDPGSKDND) are compositionally biased toward basic and acidic residues.

Belongs to the R-transferase family.

The catalysed reaction is an N-terminal L-alpha-aminoacyl-[protein] + L-arginyl-tRNA(Arg) = an N-terminal L-arginyl-L-aminoacyl-[protein] + tRNA(Arg) + H(+). Involved in the post-translational conjugation of arginine to the N-terminal aspartate or glutamate of a protein. This arginylation is required for degradation of the protein via the ubiquitin pathway. Component of the N-end rule pathway with ATE2 and PRT6. The N-end rule pathway regulates seed after-ripening, seedling sugar sensitivity, seedling lipid breakdown, and abscisic acid (ABA) sensitivity of germination. The end-rule pathway regulates various aspects of leaf and shoot development. Involved in the oxygen-dependent N-arginylation of RAP2-12, an activator of hypoxic gene expression. This N-terminal modification leads to ubiquitination by PRT6 and subsequent degradation of RAP2-12 under aerobic conditions. Has an important role in the progression of leaf senescence. Involved in disease resistance. The end-rule pathway plays a role in regulating the timing and amplitude of the immune response following infection with the bacterial pathogen Pseudomonas syringae pv tomato. Regulates the biosynthesis of plant-defense metabolites such as glucosinolates, and the biosynthesis and response to the phytohormone jasmonate (JA), which plays a key role in plant immunity. This Arabidopsis thaliana (Mouse-ear cress) protein is Arginyl-tRNA--protein transferase 1.